The sequence spans 807 residues: ATP-binding cassette sub-family F member 1 (807 aa).

The tract at residues Met1–Met227 is disordered. Ser22 carries the post-translational modification Phosphoserine. Positions Lys29–Lys39 are enriched in basic residues. Basic and acidic residues predominate over residues Val47 to Gln65. A compositionally biased stretch (basic residues) spans Gln73–Lys85. Residue Ser106 is modified to Phosphoserine. Phosphoserine; by CK2 is present on residues Ser110 and Ser141. Residues Glu148–Arg161 show a composition bias toward basic and acidic residues. Ser167 is subject to Phosphoserine. The segment covering Leu197 to Glu207 has biased composition (acidic residues). The segment covering Ile208–Met227 has biased composition (basic and acidic residues). Residues Ile266–Leu510 enclose the ABC transporter 1 domain. Gly298 to Thr305 serves as a coordination point for ATP. Residues Lys521 to Thr542 are compositionally biased toward basic and acidic residues. The interval Lys521–Leu564 is disordered. At Ser557 the chain carries Phosphoserine. Residues Leu587 to Val802 form the ABC transporter 2 domain. Residue Gly620–Ser627 participates in ATP binding.

The protein belongs to the ABC transporter superfamily. ABCF family. EF3 subfamily. As to quaternary structure, interacts (via N-terminus) with EIF2S1; the interaction is independent of its phosphorylated status. Associates (via both ABC transporter domains) with the ribosomes. Post-translationally, phosphorylated at phosphoserine and phosphothreonine. Phosphorylation on Ser-110 and Ser-141 by CK2; inhibits association of EIF2 with ribosomes.

The protein resides in the cytoplasm. The protein localises to the nucleus. Its subcellular location is the nucleoplasm. It localises to the nucleus envelope. Its function is as follows. Required for efficient Cap- and IRES-mediated mRNA translation initiation. Not involved in the ribosome biogenesis. The sequence is that of ATP-binding cassette sub-family F member 1 (ABCF1) from Sus scrofa (Pig).